A 424-amino-acid polypeptide reads, in one-letter code: Dihydrolipoyllysine-residue succinyltransferase component of 2-oxoglutarate dehydrogenase complex (424 aa).

A Lipoyl-binding domain is found at 1 to 76; that stretch reads MPEVKVPELA…EVGQAIAVVG (76 aa). Residue lysine 42 is modified to N6-lipoyllysine. 2 disordered regions span residues 76 to 138 and 155 to 204; these read GEGS…KYAR and VRKE…RKKT. Positions 91 to 105 are enriched in basic and acidic residues; that stretch reads EAPKQETETSTDDKS. Polar residues predominate over residues 122–131; it reads DNNQRVNATP. The region spanning 128-164 is the Peripheral subunit-binding (PSBD) domain; sequence NATPSARKYAREKGIDLSEIAAASNDVVRKEHVDQSQ. Positions 162 to 176 are enriched in low complexity; it reads QSQTQTSTQQQAQPA. Active-site residues include histidine 395 and aspartate 399.

This sequence belongs to the 2-oxoacid dehydrogenase family. In terms of assembly, forms a 24-polypeptide structural core with octahedral symmetry. Part of the 2-oxoglutarate dehydrogenase (OGDH) complex composed of E1 (2-oxoglutarate dehydrogenase), E2 (dihydrolipoamide succinyltransferase) and E3 (dihydrolipoamide dehydrogenase); the complex contains multiple copies of the three enzymatic components (E1, E2 and E3). It depends on (R)-lipoate as a cofactor.

It catalyses the reaction N(6)-[(R)-dihydrolipoyl]-L-lysyl-[protein] + succinyl-CoA = N(6)-[(R)-S(8)-succinyldihydrolipoyl]-L-lysyl-[protein] + CoA. Its pathway is amino-acid degradation; L-lysine degradation via saccharopine pathway; glutaryl-CoA from L-lysine: step 6/6. E2 component of the 2-oxoglutarate dehydrogenase (OGDH) complex which catalyzes the second step in the conversion of 2-oxoglutarate to succinyl-CoA and CO(2). The protein is Dihydrolipoyllysine-residue succinyltransferase component of 2-oxoglutarate dehydrogenase complex (odhB) of Staphylococcus saprophyticus subsp. saprophyticus (strain ATCC 15305 / DSM 20229 / NCIMB 8711 / NCTC 7292 / S-41).